The primary structure comprises 344 residues: Polycomb group RING finger protein 2 (344 aa).

The segment at 18 to 57 (CALCGGYFIDATTIVECLHSFCKTCIVRYLETNKYCPMCD) adopts an RING-type zinc-finger fold. Residues lysine 51 and lysine 88 each participate in a glycyl lysine isopeptide (Lys-Gly) (interchain with G-Cter in SUMO2) cross-link. A Nuclear localization signal motif is present at residues 81–95 (KLVPGLFKDEMKRRR). Residues 240-253 (TVPTPSEGTNTSGA) are compositionally biased toward polar residues. A disordered region spans residues 240 to 344 (TVPTPSEGTN…VNGAPVPPLT (105 aa)). Residues 263-313 (APSPATLPATSSSLPSPATPSHGSPSSHGPPATHPTSPTPPSTASGATTAA) are compositionally biased toward low complexity. Over residues 314–328 (NGGSLNCLQTPSSTS) the composition is skewed to polar residues. Threonine 344 carries the phosphothreonine modification.

In terms of assembly, exists as both a monomer and homodimer. Component of a PRC1-like complex. Interacts with CBX8, RING1 and RNF2. Interacts with CBX7. Interacts with PHC2. Phosphorylated. Homodimer formation is regulated by phosphorylation with only unphosphorylated proteins forming homodimers. Detected in all tissues examined with high expression found in placenta lung and kidney and low expression, in liver, pancreas and skeletal muscle.

It localises to the nucleus. Functionally, transcriptional repressor. Binds specifically to the DNA sequence 5'-GACTNGACT-3'. Has tumor suppressor activity. May play a role in control of cell proliferation and/or neural cell development. Regulates proliferation of early T progenitor cells by maintaining expression of HES1. Also plays a role in antero-posterior specification of the axial skeleton and negative regulation of the self-renewal activity of hematopoietic stem cells. Component of a Polycomb group (PcG) multiprotein PRC1-like complex, a complex class required to maintain the transcriptionally repressive state of many genes, including Hox genes, throughout development. PcG PRC1 complex acts via chromatin remodeling and modification of histones; it mediates monoubiquitination of histone H2A 'Lys-119', rendering chromatin heritably changed in its expressibility. Within the PRC1-like complex, regulates RNF2 ubiquitin ligase activity. The sequence is that of Polycomb group RING finger protein 2 (PCGF2) from Homo sapiens (Human).